The primary structure comprises 90 residues: Small ribosomal subunit protein uS19 (90 aa).

It belongs to the universal ribosomal protein uS19 family.

Protein S19 forms a complex with S13 that binds strongly to the 16S ribosomal RNA. This Hydrogenovibrio crunogenus (strain DSM 25203 / XCL-2) (Thiomicrospira crunogena) protein is Small ribosomal subunit protein uS19.